Here is a 296-residue protein sequence, read N- to C-terminus: Fructose-bisphosphate aldolase class 1 (296 aa).

Residue Glu-175 is the Proton acceptor of the active site. Lys-212 acts as the Schiff-base intermediate with dihydroxyacetone-P in catalysis.

It belongs to the class I fructose-bisphosphate aldolase family.

It carries out the reaction beta-D-fructose 1,6-bisphosphate = D-glyceraldehyde 3-phosphate + dihydroxyacetone phosphate. The protein operates within carbohydrate degradation; glycolysis; D-glyceraldehyde 3-phosphate and glycerone phosphate from D-glucose: step 4/4. This chain is Fructose-bisphosphate aldolase class 1, found in Staphylococcus aureus (strain MRSA252).